Consider the following 280-residue polypeptide: DegV domain-containing protein M6_Spy1440 (280 aa).

In terms of domain architecture, DegV spans 3-280 (WKIVTDSGCD…DGGLLMGYEI (278 aa)). 2 residues coordinate hexadecanoate: Ser-63 and Ser-91.

May bind long-chain fatty acids, such as palmitate, and may play a role in lipid transport or fatty acid metabolism. The sequence is that of DegV domain-containing protein M6_Spy1440 from Streptococcus pyogenes serotype M6 (strain ATCC BAA-946 / MGAS10394).